The chain runs to 162 residues: uncharacterized protein (162 aa).

The next 3 membrane-spanning stretches (helical) occupy residues 28–50 (ALAL…VCFF), 57–76 (LLLL…DPWL), and 108–130 (YNTM…YALA).

The protein resides in the cell membrane. This is an uncharacterized protein from Treponema pallidum (strain Nichols).